Reading from the N-terminus, the 124-residue chain is Large ribosomal subunit protein bL12 (124 aa).

This sequence belongs to the bacterial ribosomal protein bL12 family. Homodimer. Part of the ribosomal stalk of the 50S ribosomal subunit. Forms a multimeric L10(L12)X complex, where L10 forms an elongated spine to which 2 to 4 L12 dimers bind in a sequential fashion. Binds GTP-bound translation factors.

Its function is as follows. Forms part of the ribosomal stalk which helps the ribosome interact with GTP-bound translation factors. Is thus essential for accurate translation. The polypeptide is Large ribosomal subunit protein bL12 (Borreliella afzelii (strain PKo) (Borrelia afzelii)).